The sequence spans 302 residues: uncharacterized protein (302 aa).

The tract at residues 1–24 is disordered; the sequence is MTEISELASSSQKPEKTKYNLPKP.

This is an uncharacterized protein from Schizosaccharomyces pombe (strain 972 / ATCC 24843) (Fission yeast).